The following is a 283-amino-acid chain: Acetylglutamate kinase (283 aa).

Residues 64-65 (GG), Arg86, and Asn179 each bind substrate.

The protein belongs to the acetylglutamate kinase family. ArgB subfamily.

It is found in the cytoplasm. The enzyme catalyses N-acetyl-L-glutamate + ATP = N-acetyl-L-glutamyl 5-phosphate + ADP. The protein operates within amino-acid biosynthesis; L-arginine biosynthesis; N(2)-acetyl-L-ornithine from L-glutamate: step 2/4. Catalyzes the ATP-dependent phosphorylation of N-acetyl-L-glutamate. This chain is Acetylglutamate kinase, found in Campylobacter hominis (strain ATCC BAA-381 / DSM 21671 / CCUG 45161 / LMG 19568 / NCTC 13146 / CH001A).